Consider the following 542-residue polypeptide: CTP synthase (542 aa).

The segment at 1–265 (MARYVFITGG…DSEVLSAFGI (265 aa)) is amidoligase domain. Ser13 provides a ligand contact to CTP. Ser13 is a binding site for UTP. 14-19 (SLGKGI) provides a ligand contact to ATP. Tyr54 is a binding site for L-glutamine. Asp71 lines the ATP pocket. Mg(2+) contacts are provided by Asp71 and Glu139. CTP is bound by residues 146–148 (DIE), 186–191 (KTKPTQ), and Lys222. Residues 186 to 191 (KTKPTQ) and Lys222 contribute to the UTP site. The region spanning 291–541 (TIAVVGKYTG…IEAAIEQSRL (251 aa)) is the Glutamine amidotransferase type-1 domain. Position 353 (Gly353) interacts with L-glutamine. Catalysis depends on Cys380, which acts as the Nucleophile; for glutamine hydrolysis. L-glutamine-binding positions include 381-384 (FGMQ), Glu404, and Arg469. Active-site residues include His514 and Glu516.

It belongs to the CTP synthase family. As to quaternary structure, homotetramer.

The catalysed reaction is UTP + L-glutamine + ATP + H2O = CTP + L-glutamate + ADP + phosphate + 2 H(+). The enzyme catalyses L-glutamine + H2O = L-glutamate + NH4(+). It carries out the reaction UTP + NH4(+) + ATP = CTP + ADP + phosphate + 2 H(+). It functions in the pathway pyrimidine metabolism; CTP biosynthesis via de novo pathway; CTP from UDP: step 2/2. Allosterically activated by GTP, when glutamine is the substrate; GTP has no effect on the reaction when ammonia is the substrate. The allosteric effector GTP functions by stabilizing the protein conformation that binds the tetrahedral intermediate(s) formed during glutamine hydrolysis. Inhibited by the product CTP, via allosteric rather than competitive inhibition. Catalyzes the ATP-dependent amination of UTP to CTP with either L-glutamine or ammonia as the source of nitrogen. Regulates intracellular CTP levels through interactions with the four ribonucleotide triphosphates. This Brucella canis (strain ATCC 23365 / NCTC 10854 / RM-666) protein is CTP synthase.